Reading from the N-terminus, the 456-residue chain is L-seryl-tRNA(Sec) selenium transferase (456 aa).

Lys288 is subject to N6-(pyridoxal phosphate)lysine.

Belongs to the SelA family. Requires pyridoxal 5'-phosphate as cofactor.

It localises to the cytoplasm. It catalyses the reaction L-seryl-tRNA(Sec) + selenophosphate + H(+) = L-selenocysteinyl-tRNA(Sec) + phosphate. Its pathway is aminoacyl-tRNA biosynthesis; selenocysteinyl-tRNA(Sec) biosynthesis; selenocysteinyl-tRNA(Sec) from L-seryl-tRNA(Sec) (bacterial route): step 1/1. Converts seryl-tRNA(Sec) to selenocysteinyl-tRNA(Sec) required for selenoprotein biosynthesis. This Helicobacter hepaticus (strain ATCC 51449 / 3B1) protein is L-seryl-tRNA(Sec) selenium transferase.